A 239-amino-acid chain; its full sequence is 4-hydroxy-tetrahydrodipicolinate reductase (239 aa).

NAD(+) is bound by residues 8–13, 78–80, and 102–105; these read GSTGKM, GTT, and SANM. Catalysis depends on H134, which acts as the Proton donor/acceptor. (S)-2,3,4,5-tetrahydrodipicolinate is bound at residue H135. The active-site Proton donor is the K138. 144 to 145 serves as a coordination point for (S)-2,3,4,5-tetrahydrodipicolinate; the sequence is GT.

The protein belongs to the DapB family.

It is found in the cytoplasm. The enzyme catalyses (S)-2,3,4,5-tetrahydrodipicolinate + NAD(+) + H2O = (2S,4S)-4-hydroxy-2,3,4,5-tetrahydrodipicolinate + NADH + H(+). The catalysed reaction is (S)-2,3,4,5-tetrahydrodipicolinate + NADP(+) + H2O = (2S,4S)-4-hydroxy-2,3,4,5-tetrahydrodipicolinate + NADPH + H(+). Its pathway is amino-acid biosynthesis; L-lysine biosynthesis via DAP pathway; (S)-tetrahydrodipicolinate from L-aspartate: step 4/4. Its function is as follows. Catalyzes the conversion of 4-hydroxy-tetrahydrodipicolinate (HTPA) to tetrahydrodipicolinate. This is 4-hydroxy-tetrahydrodipicolinate reductase from Rickettsia africae (strain ESF-5).